The following is a 347-amino-acid chain: MHFIDQAEIEVQGGNGGDGIVAFRREKYVPAGGPSGGNGGRGGSVILVADPGLQTLLDFRFQPVIKAEHGAKGGPNHRSGASGADRLVRVPCGTVVFNAETGELLGDLVGKGDQLLVARGGKGGLGNAHFLSNHNRAPRQFTKGEAGERVRLRLELKLIAEVGIVGLPNAGKSTLISVVSSARPKIADYPFTTLQPNLGVVPHPSGDGVVFADIPGLIEGAHLGVGLGHEFLRHVERTRVLIHLVDGTAADPVKDYQVIQQELRAYGHGLIDKPQILVLNKIDVLDPQQVAERAQRLSAAAGTSVVTISAIAKQGLDPLLQRVWQCLGRGSQQPAQLDLVGAKSIQS.

The Obg domain occupies 1-159 (MHFIDQAEIE…VRLRLELKLI (159 aa)). The region spanning 160–328 (AEVGIVGLPN…LLQRVWQCLG (169 aa)) is the OBG-type G domain. GTP-binding positions include 166-173 (GLPNAGKS), 191-195 (FTTLQ), 213-216 (DIPG), 280-283 (NKID), and 309-311 (SAI). Residues serine 173 and threonine 193 each contribute to the Mg(2+) site.

Belongs to the TRAFAC class OBG-HflX-like GTPase superfamily. OBG GTPase family. In terms of assembly, monomer. The cofactor is Mg(2+).

The protein resides in the cytoplasm. In terms of biological role, an essential GTPase which binds GTP, GDP and possibly (p)ppGpp with moderate affinity, with high nucleotide exchange rates and a fairly low GTP hydrolysis rate. Plays a role in control of the cell cycle, stress response, ribosome biogenesis and in those bacteria that undergo differentiation, in morphogenesis control. The protein is GTPase Obg of Synechococcus sp. (strain JA-2-3B'a(2-13)) (Cyanobacteria bacterium Yellowstone B-Prime).